The sequence spans 245 residues: Phycocyanobilin:ferredoxin oxidoreductase (245 aa).

This sequence belongs to the HY2 family.

The enzyme catalyses (2R,3Z)-phycocyanobilin + 4 oxidized [2Fe-2S]-[ferredoxin] = biliverdin IXalpha + 4 reduced [2Fe-2S]-[ferredoxin] + 4 H(+). In terms of biological role, catalyzes the four-electron reduction of biliverdin IX-alpha (2-electron reduction at both the A and D rings); the reaction proceeds via an isolatable 2-electron intermediate, 181,182-dihydrobiliverdin. Upon overexpression in E.coli with PCB:ferredoxin oxidoreductase, CpeS and either CpcB or PecB permits synthesis of phycocyanin-coupled CpcB or PecB. This chain is Phycocyanobilin:ferredoxin oxidoreductase (pcyA), found in Nostoc sp. (strain PCC 7120 / SAG 25.82 / UTEX 2576).